A 343-amino-acid polypeptide reads, in one-letter code: GTPase Obg (343 aa).

One can recognise an Obg domain in the interval 1–159 (MKFIDEVKIQ…FELRLELRVL (159 aa)). One can recognise an OBG-type G domain in the interval 160–334 (ADVGLLGLPN…LIYAIMGHLQ (175 aa)). GTP contacts are provided by residues 166 to 173 (GLPNAGKS), 191 to 195 (FTTLY), 213 to 216 (DIPG), 284 to 287 (NKVD), and 315 to 317 (SAL). Residues Ser-173 and Thr-193 each contribute to the Mg(2+) site.

It belongs to the TRAFAC class OBG-HflX-like GTPase superfamily. OBG GTPase family. Monomer. Mg(2+) serves as cofactor.

It is found in the cytoplasm. Its function is as follows. An essential GTPase which binds GTP, GDP and possibly (p)ppGpp with moderate affinity, with high nucleotide exchange rates and a fairly low GTP hydrolysis rate. Plays a role in control of the cell cycle, stress response, ribosome biogenesis and in those bacteria that undergo differentiation, in morphogenesis control. This is GTPase Obg from Nitrosomonas europaea (strain ATCC 19718 / CIP 103999 / KCTC 2705 / NBRC 14298).